A 75-amino-acid polypeptide reads, in one-letter code: Probable pilin MJ1469 (75 aa).

The propeptide occupies 1–11 (MKPKKIISNKA). Residues 12 to 20 (QISLELALL) carry the QXSXEXXXL motif.

In terms of processing, the N-terminus is cleaved by the prepilin peptidase EppA, which recognizes the class III signal sequence.

It is found in the secreted. The protein resides in the cell surface. Its subcellular location is the fimbrium. This is Probable pilin MJ1469 from Methanocaldococcus jannaschii (strain ATCC 43067 / DSM 2661 / JAL-1 / JCM 10045 / NBRC 100440) (Methanococcus jannaschii).